The chain runs to 167 residues: Putative pre-16S rRNA nuclease (167 aa).

The interval 1–24 (MVLTQHRVPDRPGDPDQDPGRGRR) is disordered. Positions 7 to 21 (RVPDRPGDPDQDPGR) are enriched in basic and acidic residues.

This sequence belongs to the YqgF nuclease family.

Its subcellular location is the cytoplasm. Functionally, could be a nuclease involved in processing of the 5'-end of pre-16S rRNA. This is Putative pre-16S rRNA nuclease from Mycolicibacterium paratuberculosis (strain ATCC BAA-968 / K-10) (Mycobacterium paratuberculosis).